The following is a 255-amino-acid chain: NAD kinase (255 aa).

Aspartate 44 (proton acceptor) is an active-site residue. NAD(+) is bound by residues 44–45 (DG), histidine 49, 114–115 (NE), aspartate 144, alanine 152, 155–160 (SAYNLS), and glutamine 216.

The protein belongs to the NAD kinase family. A divalent metal cation serves as cofactor.

The protein resides in the cytoplasm. It catalyses the reaction NAD(+) + ATP = ADP + NADP(+) + H(+). Functionally, involved in the regulation of the intracellular balance of NAD and NADP, and is a key enzyme in the biosynthesis of NADP. Catalyzes specifically the phosphorylation on 2'-hydroxyl of the adenosine moiety of NAD to yield NADP. In Rickettsia felis (strain ATCC VR-1525 / URRWXCal2) (Rickettsia azadi), this protein is NAD kinase.